A 109-amino-acid chain; its full sequence is MQRIKKGDKVVIIAGKHKQKTGIVLQVFVKEQRAIVEGINMVKRHTKENAQNQKGGIIEKEAPIHLSNLALLDHKAKDVRPVKVKYGTDPKTNKKVRLSRKTNNLVGGQ.

The interval 85–109 (KYGTDPKTNKKVRLSRKTNNLVGGQ) is disordered.

The protein belongs to the universal ribosomal protein uL24 family. Part of the 50S ribosomal subunit.

Functionally, one of two assembly initiator proteins, it binds directly to the 5'-end of the 23S rRNA, where it nucleates assembly of the 50S subunit. Its function is as follows. One of the proteins that surrounds the polypeptide exit tunnel on the outside of the subunit. The protein is Large ribosomal subunit protein uL24 of Mycoplasmoides gallisepticum (strain R(low / passage 15 / clone 2)) (Mycoplasma gallisepticum).